Here is a 426-residue protein sequence, read N- to C-terminus: MIDQRLLRENPNLISEGLKSRGMDVDLGPLQKFCKDLKDLEEKRNSLQAQGNSIGKEVGQKIKQGLPHDSEEISNLRVKGNQIKKQVGIIEEEEKSISNKLNEQILCLPNLPEKNSLEGKNEKDNKELRRWGEPISGNTLKEHWEIANQLNLWDSERSSVIAKSRFVTLFKHAAKLERSLINFMLDLHIKKGYLEVLPPALVNTASLTGSGQLPKFAEESFRCADDDLWLTPTAEVPITSLHRGEIIPRDLLPLKYVAYSPCFRREAGSYGRDTRGLIRLHQFNKVELYWFSTPETSEDALEQITSDAESVLQELELPYRVIQLCTGDLGFSAKKTYDLEVWLPGANTFREISSCSNCGDFQARRSSIRTKDNNKKNILLHTLNGSGLAIGRTMAAILENGQQSDGSINLPKALIPYFGSNKLQPE.

L-serine is bound at residue 233-235; the sequence is TAE. Residue 264 to 266 participates in ATP binding; that stretch reads RRE. Glu287 is a binding site for L-serine. 351-354 contributes to the ATP binding site; that stretch reads EISS. Ser386 lines the L-serine pocket.

The protein belongs to the class-II aminoacyl-tRNA synthetase family. Type-1 seryl-tRNA synthetase subfamily. Homodimer. The tRNA molecule binds across the dimer.

It localises to the cytoplasm. It carries out the reaction tRNA(Ser) + L-serine + ATP = L-seryl-tRNA(Ser) + AMP + diphosphate + H(+). It catalyses the reaction tRNA(Sec) + L-serine + ATP = L-seryl-tRNA(Sec) + AMP + diphosphate + H(+). Its pathway is aminoacyl-tRNA biosynthesis; selenocysteinyl-tRNA(Sec) biosynthesis; L-seryl-tRNA(Sec) from L-serine and tRNA(Sec): step 1/1. In terms of biological role, catalyzes the attachment of serine to tRNA(Ser). Is also able to aminoacylate tRNA(Sec) with serine, to form the misacylated tRNA L-seryl-tRNA(Sec), which will be further converted into selenocysteinyl-tRNA(Sec). The protein is Serine--tRNA ligase of Prochlorococcus marinus (strain NATL1A).